A 339-amino-acid chain; its full sequence is Anthranilate phosphoribosyltransferase (339 aa).

Residues Gly78, 81–82 (GD), Thr86, 88–91 (NAST), 106–114 (KHGNRSVTS), and Ser118 contribute to the 5-phospho-alpha-D-ribose 1-diphosphate site. Gly78 contacts anthranilate. Ser90 contributes to the Mg(2+) binding site. Asn109 is a binding site for anthranilate. Anthranilate is bound at residue Arg164. Mg(2+)-binding residues include Asp225 and Glu226. Residues 248–265 (TVAPEDVGLDRADPKDVA) show a composition bias toward basic and acidic residues. Positions 248–271 (TVAPEDVGLDRADPKDVAGADPET) are disordered.

This sequence belongs to the anthranilate phosphoribosyltransferase family. Homodimer. Mg(2+) serves as cofactor.

It carries out the reaction N-(5-phospho-beta-D-ribosyl)anthranilate + diphosphate = 5-phospho-alpha-D-ribose 1-diphosphate + anthranilate. It participates in amino-acid biosynthesis; L-tryptophan biosynthesis; L-tryptophan from chorismate: step 2/5. Catalyzes the transfer of the phosphoribosyl group of 5-phosphorylribose-1-pyrophosphate (PRPP) to anthranilate to yield N-(5'-phosphoribosyl)-anthranilate (PRA). The protein is Anthranilate phosphoribosyltransferase of Methanopyrus kandleri (strain AV19 / DSM 6324 / JCM 9639 / NBRC 100938).